Here is an 870-residue protein sequence, read N- to C-terminus: Histidine biosynthesis trifunctional protein (870 aa).

The tract at residues 1 to 285 (METTLPLPFL…KFVVKQKGRF (285 aa)) is phosphoribosyl-AMP cyclohydrolase. The tract at residues 286-367 (CHLDQSGCFG…FYFALTRAVA (82 aa)) is phosphoribosyl-ATP pyrophosphohydrolase. A histidinol dehydrogenase region spans residues 368–870 (AGVTLADIER…IRLEHMSKSN (503 aa)). Residues glutamine 693 and histidine 696 each contribute to the Zn(2+) site. Catalysis depends on residues glutamate 762 and histidine 763. Aspartate 796 and histidine 855 together coordinate Zn(2+).

The protein in the C-terminal section; belongs to the histidinol dehydrogenase family. Zn(2+) is required as a cofactor.

The enzyme catalyses 1-(5-phospho-beta-D-ribosyl)-5'-AMP + H2O = 1-(5-phospho-beta-D-ribosyl)-5-[(5-phospho-beta-D-ribosylamino)methylideneamino]imidazole-4-carboxamide. The catalysed reaction is 1-(5-phospho-beta-D-ribosyl)-ATP + H2O = 1-(5-phospho-beta-D-ribosyl)-5'-AMP + diphosphate + H(+). It carries out the reaction L-histidinol + 2 NAD(+) + H2O = L-histidine + 2 NADH + 3 H(+). Its pathway is amino-acid biosynthesis; L-histidine biosynthesis; L-histidine from 5-phospho-alpha-D-ribose 1-diphosphate: step 2/9. It participates in amino-acid biosynthesis; L-histidine biosynthesis; L-histidine from 5-phospho-alpha-D-ribose 1-diphosphate: step 3/9. It functions in the pathway amino-acid biosynthesis; L-histidine biosynthesis; L-histidine from 5-phospho-alpha-D-ribose 1-diphosphate: step 9/9. This chain is Histidine biosynthesis trifunctional protein (his-3), found in Neurospora crassa (strain ATCC 24698 / 74-OR23-1A / CBS 708.71 / DSM 1257 / FGSC 987).